We begin with the raw amino-acid sequence, 297 residues long: 4-hydroxy-tetrahydrodipicolinate synthase (297 aa).

Pyruvate is bound at residue Thr47. Catalysis depends on Tyr135, which acts as the Proton donor/acceptor. Catalysis depends on Lys163, which acts as the Schiff-base intermediate with substrate. Residue Ile205 participates in pyruvate binding.

This sequence belongs to the DapA family. Homotetramer; dimer of dimers.

It is found in the cytoplasm. It catalyses the reaction L-aspartate 4-semialdehyde + pyruvate = (2S,4S)-4-hydroxy-2,3,4,5-tetrahydrodipicolinate + H2O + H(+). It participates in amino-acid biosynthesis; L-lysine biosynthesis via DAP pathway; (S)-tetrahydrodipicolinate from L-aspartate: step 3/4. Functionally, catalyzes the condensation of (S)-aspartate-beta-semialdehyde [(S)-ASA] and pyruvate to 4-hydroxy-tetrahydrodipicolinate (HTPA). The protein is 4-hydroxy-tetrahydrodipicolinate synthase of Cytophaga hutchinsonii (strain ATCC 33406 / DSM 1761 / CIP 103989 / NBRC 15051 / NCIMB 9469 / D465).